Consider the following 734-residue polypeptide: Photosystem I P700 chlorophyll a apoprotein A2 (734 aa).

8 helical membrane passes run 46-69 (IFAS…FHVA), 135-158 (LYTG…LHLQ), 175-199 (LNHH…HVAI), 273-291 (IAHH…GHMY), 330-353 (IHFQ…QHMY), 369-395 (AALY…IFFI), 417-439 (AIIS…LYVH), and 517-535 (FLVH…LILV). [4Fe-4S] cluster contacts are provided by Cys559 and Cys568. 2 helical membrane passes run 575 to 596 (AFYL…YWHW) and 643 to 665 (LSVW…MFLI). Chlorophyll a is bound by residues His654, Met662, and Tyr670. Trp671 provides a ligand contact to phylloquinone. The chain crosses the membrane as a helical span at residues 707 to 727 (LVGLAHFSVGYIFTYAAFLIA).

Belongs to the PsaA/PsaB family. The PsaA/B heterodimer binds the P700 chlorophyll special pair and subsequent electron acceptors. PSI consists of a core antenna complex that captures photons, and an electron transfer chain that converts photonic excitation into a charge separation. The eukaryotic PSI reaction center is composed of at least 11 subunits. P700 is a chlorophyll a/chlorophyll a' dimer, A0 is one or more chlorophyll a, A1 is one or both phylloquinones and FX is a shared 4Fe-4S iron-sulfur center. is required as a cofactor.

It localises to the plastid. Its subcellular location is the chloroplast thylakoid membrane. It carries out the reaction reduced [plastocyanin] + hnu + oxidized [2Fe-2S]-[ferredoxin] = oxidized [plastocyanin] + reduced [2Fe-2S]-[ferredoxin]. In terms of biological role, psaA and PsaB bind P700, the primary electron donor of photosystem I (PSI), as well as the electron acceptors A0, A1 and FX. PSI is a plastocyanin-ferredoxin oxidoreductase, converting photonic excitation into a charge separation, which transfers an electron from the donor P700 chlorophyll pair to the spectroscopically characterized acceptors A0, A1, FX, FA and FB in turn. Oxidized P700 is reduced on the lumenal side of the thylakoid membrane by plastocyanin. This Dioscorea elephantipes (Elephant's foot yam) protein is Photosystem I P700 chlorophyll a apoprotein A2.